The following is a 601-amino-acid chain: Regulatory protein BlaR1 (601 aa).

The Extracellular segment spans residues 1–8; that stretch reads MSSSFFIP. The helical transmembrane segment at 9–26 threads the bilayer; sequence FLVSQILLSLFFSIIILI. At 27-35 the chain is on the cytoplasmic side; it reads KKLLRTQIT. A helical transmembrane segment spans residues 36–52; the sequence is VGTHYYISVISLLALIA. Residues 53–115 are Extracellular-facing; sequence PFIPFHFLKS…EQSSSKMIDS (63 aa). The chain crosses the membrane as a helical span at residues 116–133; sequence AFFAVWILGVAVMLLATL. Residues 134–322 lie on the Cytoplasmic side of the membrane; that stretch reads YSNLKIGKIK…QTASPLLKAK (189 aa). A helical transmembrane segment spans residues 323–339; it reads SALVFTLVLGAILAGTP. Over 340–601 the chain is Extracellular; that stretch reads SVSILAMQKE…KKGIYPSVSR (262 aa). Positions 354–601 are beta-lactam antibiotic sensor domain; that stretch reads PGTNVEYEDY…KKGIYPSVSR (248 aa). S402 functions as the Acyl-ester intermediate in the catalytic mechanism. Residue K405 is modified to N6-carboxylysine.

Belongs to the peptidase M56 family. Carboxylation occurs on two lysine residues. Carboxylation at 'Lys-405' activates the active site serine residue for acylation. On acylation, the lysine side chain experiences a spontaneous decarboxylation that entraps the sensor in its activated state.

Its subcellular location is the cell membrane. Integral membrane protein involved in sensing of the presence of beta-lactam antibiotics and transduction of the information to the cytoplasm. Mechanistically, activation of the signal transducer involves acylation of a serine in the C-terminal sensor domain upon binding of the beta-lactam antibiotic. In turn, a conformational change occurs and the signal is transmitted from the cell surface to the cytoplasm. There, the zinc protease domain is activated and initiates autoproteolysis as well as cleavage of the transcriptional repressor BlaI leading to derepression of antibiotic resistance genes. The protein is Regulatory protein BlaR1 (blaR1) of Bacillus licheniformis.